The primary structure comprises 207 residues: Ribosomal RNA small subunit methyltransferase G (207 aa).

S-adenosyl-L-methionine contacts are provided by residues glycine 71, phenylalanine 76, 122–123 (AE), and arginine 135.

The protein belongs to the methyltransferase superfamily. RNA methyltransferase RsmG family.

The protein resides in the cytoplasm. Its function is as follows. Specifically methylates the N7 position of a guanine in 16S rRNA. The protein is Ribosomal RNA small subunit methyltransferase G of Cytophaga hutchinsonii (strain ATCC 33406 / DSM 1761 / CIP 103989 / NBRC 15051 / NCIMB 9469 / D465).